A 563-amino-acid chain; its full sequence is Inclusion membrane protein M (563 aa).

Residues 1-36 are Cytoplasmic-facing; sequence MVYFRAHQPRHTPKTFPLEVHHSFSDKHPQIAKAMR. A helical transmembrane segment spans residues 37 to 57; sequence ITGIALAALSLLAVVACVIAV. Position 58 (serine 58) is a topological domain, vacuolar. The helical transmembrane segment at 59–79 threads the bilayer; it reads AGGAAIPLAVISGIAVMSGLL. The Cytoplasmic segment spans residues 80-252; the sequence is SAATIICSAK…VLKVALSLGV (173 aa). A helical membrane pass occupies residues 253-273; sequence LAGVAALIIFLPPSLPFIAVI. Position 274 (glycine 274) is a topological domain, vacuolar. Residues 275–295 form a helical membrane-spanning segment; that stretch reads VSSLALGMASFLMIRGIKYLL. Over 296–563 the chain is Cytoplasmic; it reads EHSPLNRKQL…QLAQYLLDNH (268 aa).

The protein belongs to the chlamydial CPn_0065/CT_288/TC_0561 family. As to quaternary structure, interacts with host CCDC146. In host cells infected with C.trachomatis incM, CCDC146 is recruited to the periphery of the pathogen-containing vacuole but recruitment is not dependent on incM.

It localises to the host vacuole. It is found in the host pathogen-containing vacuole. Its subcellular location is the host pathogen-containing vacuole membrane. The protein localises to the host pathogen-containing vacuole lumen. The protein resides in the secreted. Functionally, interferes with host cell cytokinesis, centrosome positioning and Golgi distribution, and contributes to the morphology and stability of the pathogen-containing vacuole. May exert its effects by acting directly or indirectly on host microtubules. The polypeptide is Inclusion membrane protein M (Chlamydia trachomatis serovar D (strain ATCC VR-885 / DSM 19411 / UW-3/Cx)).